The primary structure comprises 106 residues: MIISTTSQLEGRPIAEYLGVVSSESVQGINFVRDFFTRFRDFFGGRSQTLESALREAREQATEELKARARQLQADAVVGVDFEISMPSVQGGMVVVFATGTAVRLK.

Belongs to the UPF0145 family.

The protein is UPF0145 protein Pput_2816 of Pseudomonas putida (strain ATCC 700007 / DSM 6899 / JCM 31910 / BCRC 17059 / LMG 24140 / F1).